We begin with the raw amino-acid sequence, 352 residues long: Adenosine deaminase (352 aa).

Zn(2+)-binding residues include histidine 24 and histidine 26. Residues histidine 26, aspartate 28, and glycine 181 each contribute to the substrate site. Histidine 208 contacts Zn(2+). The Proton donor role is filled by glutamate 211. Aspartate 290 is a Zn(2+) binding site.

This sequence belongs to the metallo-dependent hydrolases superfamily. Adenosine and AMP deaminases family. Adenosine deaminase subfamily. Requires Zn(2+) as cofactor.

The enzyme catalyses adenosine + H2O + H(+) = inosine + NH4(+). It catalyses the reaction 2'-deoxyadenosine + H2O + H(+) = 2'-deoxyinosine + NH4(+). Functionally, catalyzes the hydrolytic deamination of adenosine and 2-deoxyadenosine. The protein is Adenosine deaminase of Lactococcus lactis subsp. lactis (strain IL1403) (Streptococcus lactis).